A 131-amino-acid polypeptide reads, in one-letter code: Ribonuclease VapC30 (131 aa).

A PINc domain is found at 1 to 129 (MVIDTSALVA…FQHTDIATVA (129 aa)). Mg(2+) contacts are provided by Asp4 and Asp99.

It belongs to the PINc/VapC protein family. It depends on Mg(2+) as a cofactor.

Toxic component of a type II toxin-antitoxin (TA) system. An RNase. Its toxic effect is neutralized by coexpression with cognate antitoxin VapB30. This is Ribonuclease VapC30 from Mycobacterium tuberculosis (strain CDC 1551 / Oshkosh).